Consider the following 134-residue polypeptide: uncharacterized protein (134 aa).

The next 3 helical transmembrane spans lie at 9-29 (PYFL…HGTA), 49-69 (MLLV…LGLF), and 107-127 (ALLY…ACAL).

The protein belongs to the DoxX family.

The protein localises to the cell membrane. This is an uncharacterized protein from Haemophilus influenzae (strain ATCC 51907 / DSM 11121 / KW20 / Rd).